Consider the following 81-residue polypeptide: Small ribosomal subunit protein eS21 (81 aa).

The protein belongs to the eukaryotic ribosomal protein eS21 family.

The protein is Small ribosomal subunit protein eS21 (RPS21) of Zea mays (Maize).